The chain runs to 232 residues: Phosphatidylserine decarboxylase proenzyme (232 aa).

The active-site Schiff-base intermediate with substrate; via pyruvic acid is the serine 190. Serine 190 is subject to Pyruvic acid (Ser); by autocatalysis.

The protein belongs to the phosphatidylserine decarboxylase family. PSD-A subfamily. Heterodimer of a large membrane-associated beta subunit and a small pyruvoyl-containing alpha subunit. Requires pyruvate as cofactor. In terms of processing, is synthesized initially as an inactive proenzyme. Formation of the active enzyme involves a self-maturation process in which the active site pyruvoyl group is generated from an internal serine residue via an autocatalytic post-translational modification. Two non-identical subunits are generated from the proenzyme in this reaction, and the pyruvate is formed at the N-terminus of the alpha chain, which is derived from the carboxyl end of the proenzyme. The post-translation cleavage follows an unusual pathway, termed non-hydrolytic serinolysis, in which the side chain hydroxyl group of the serine supplies its oxygen atom to form the C-terminus of the beta chain, while the remainder of the serine residue undergoes an oxidative deamination to produce ammonia and the pyruvoyl prosthetic group on the alpha chain.

The protein resides in the cell membrane. It carries out the reaction a 1,2-diacyl-sn-glycero-3-phospho-L-serine + H(+) = a 1,2-diacyl-sn-glycero-3-phosphoethanolamine + CO2. It functions in the pathway phospholipid metabolism; phosphatidylethanolamine biosynthesis; phosphatidylethanolamine from CDP-diacylglycerol: step 2/2. In terms of biological role, catalyzes the formation of phosphatidylethanolamine (PtdEtn) from phosphatidylserine (PtdSer). The polypeptide is Phosphatidylserine decarboxylase proenzyme (Bartonella bacilliformis (strain ATCC 35685 / KC583 / Herrer 020/F12,63)).